Consider the following 30-residue polypeptide: Cycloviolacin-H4 (30 aa).

Positions 1–30 form a cross-link, cyclopeptide (Gly-Asn); sequence GIPCAESCVWIPCTVTALLGCSCSNNVCYN. 3 disulfide bridges follow: cysteine 4–cysteine 21, cysteine 8–cysteine 23, and cysteine 13–cysteine 28.

In terms of processing, this is a cyclic peptide.

Probably participates in a plant defense mechanism. Has potent hemolytic activity. The protein is Cycloviolacin-H4 of Viola hederacea (Australian violet).